Reading from the N-terminus, the 431-residue chain is Argininosuccinate lyase (431 aa).

This sequence belongs to the lyase 1 family. Argininosuccinate lyase subfamily.

The protein localises to the cytoplasm. It carries out the reaction 2-(N(omega)-L-arginino)succinate = fumarate + L-arginine. It functions in the pathway amino-acid biosynthesis; L-arginine biosynthesis; L-arginine from L-ornithine and carbamoyl phosphate: step 3/3. This is Argininosuccinate lyase from Xanthomonas campestris pv. campestris (strain ATCC 33913 / DSM 3586 / NCPPB 528 / LMG 568 / P 25).